A 4318-amino-acid chain; its full sequence is Cytoplasmic dynein 2 heavy chain 1 (4318 aa).

Positions 1-1658 are stem; the sequence is MPAEDARKEY…IMRMVDAEFQ (1658 aa). Residue 147-154 participates in ATP binding; that stretch reads LKSLVRKQ. Coiled-coil stretches lie at residues 1328–1354 and 1402–1431; these read DKAT…QRKW and LRTT…RSIL. 4 AAA regions span residues 1659-1883, 1951-2171, 2261-2515, and 2623-2871; these read YTYE…VLRG, DAIR…RQGD, ASDF…WVLG, and TFAR…SSSV. 1697–1704 provides a ligand contact to ATP; it reads GPAGTGKT. The stretch at 1959–1986 forms a coiled coil; the sequence is EHNLVVMETQVKKALELYEQLRQRMGVV. ATP is bound by residues 1989 to 1996, 2301 to 2308, and 2661 to 2668; these read GPSGSGKS, GPDGCGKG, and GRSGVGRR. A stalk region spans residues 2888 to 3176; that stretch reads DVYRRKKQGV…YELEKEQETI (289 aa). 2 coiled-coil regions span residues 2908-2989 and 3423-3480; these read VAKL…AEIE and QHEK…KTKE. 2 AAA regions span residues 3251 to 3487 and 3699 to 3914; these read LSTE…TITQ and MTFF…IIDR.

Belongs to the dynein heavy chain family. In terms of assembly, the cytoplasmic dynein complex 2 is probably composed by a heavy chain DYH1B homodimer and a number of light intermediate chains.

It is found in the cytoplasm. It localises to the cytoskeleton. The protein resides in the cilium axoneme. Its subcellular location is the cell membrane. Functionally, may function as a motor for intraflagellar retrograde transport. Functions in cilia biogenesis. The polypeptide is Cytoplasmic dynein 2 heavy chain 1 (DYH1B) (Tripneustes gratilla (Hawaian sea urchin)).